The sequence spans 281 residues: Ornithine lipid ester-linked acyl 2-hydroxylase (281 aa).

Residues 1-24 are compositionally biased toward polar residues; that stretch reads MTESPLSAPAPTSNQSPAPEQTFG. Positions 1 to 29 are disordered; sequence MTESPLSAPAPTSNQSPAPEQTFGTAGIA.

It belongs to the aspartyl/asparaginyl beta-hydroxylase family.

It carries out the reaction an N(2)-[(3R)-3-(2-saturated-acyloxy)acyl]-L-ornithine lipid + 2-oxoglutarate + O2 = a 2-hydroxyornithine lipid + succinate + CO2. The protein operates within lipid metabolism. Functionally, involved in the biosynthesis of ornithine lipids (OLs), which are phosphorus-free membrane lipids. Catalyzes the hydroxylation at the 2 position of the secondary fatty acid of OL. Contributes to symbiotic performance and acid tolerance. In Rhizobium tropici, this protein is Ornithine lipid ester-linked acyl 2-hydroxylase.